A 424-amino-acid chain; its full sequence is Myb family transcription factor RLI1 (424 aa).

The tract at residues 144-165 (RPQKRDSGERTPLPPPSQQQHQ) is disordered. Residues 238–298 (APSKTRIRWT…HLQKYRIAKY (61 aa)) enclose the HTH myb-type domain. Residues 269–294 (PKGILKLMNSDGLTIYHIKSHLQKYR) constitute a DNA-binding region (H-T-H motif). The LHEQLE signature appears at 342 to 347 (LHEQLE). Residues 342–391 (LHEQLEIQRNLQLRIEEQGKRLQKMFEDQLKASRSVMEPQELDDVVAFAA) adopt a coiled-coil conformation.

It belongs to the MYB-CC family. As to quaternary structure, homodimer. Interacts with PHR2 in the nucleus. Interacts with SPX1 and SPX2 in the nucleus; these interactions prevent binding to the promoters of target genes, thus regulating negatively leaf inclination in response to phosphate (Pi) starvation.

It localises to the nucleus. Its function is as follows. Transcription factor binding to specific DNA sequences of target genes promoters, such as the motif R1BS 5'-NAKATNCN-3' and the motif P1BS 5'-GNATATNC-3' to trigger their expression. Nitrate-induced component involved in modulating phosphate (Pi) response and homeostasis together with PHR2; activates directly the expression of Pi starvation-induced (PSI) genes upon nitrate disponibility, thus triggering the nitrate-induced phosphate response (NIPR) promoting Pi uptake activity. Involved in the shoot architecture; positively regulates leaf inclination by affecting lamina joint cell elongation via the direct promotion of ILI4/BU1 and BC1 genes expression, especially in response to phosphate (Pi) availability. Regulates both brassinolide (BL) biosynthesis and signaling by directly activating BL-biosynthesis and signaling genes. This chain is Myb family transcription factor RLI1, found in Oryza sativa subsp. indica (Rice).